The following is a 468-amino-acid chain: 3-isopropylmalate dehydratase large subunit (468 aa).

C349, C409, and C412 together coordinate [4Fe-4S] cluster.

It belongs to the aconitase/IPM isomerase family. LeuC type 1 subfamily. Heterodimer of LeuC and LeuD. [4Fe-4S] cluster is required as a cofactor.

It carries out the reaction (2R,3S)-3-isopropylmalate = (2S)-2-isopropylmalate. It participates in amino-acid biosynthesis; L-leucine biosynthesis; L-leucine from 3-methyl-2-oxobutanoate: step 2/4. Functionally, catalyzes the isomerization between 2-isopropylmalate and 3-isopropylmalate, via the formation of 2-isopropylmaleate. This chain is 3-isopropylmalate dehydratase large subunit, found in Ruegeria pomeroyi (strain ATCC 700808 / DSM 15171 / DSS-3) (Silicibacter pomeroyi).